The primary structure comprises 407 residues: Dephospho-CoA kinase (407 aa).

A DPCK domain is found at 3-201 (RIGLTGGIGA…ERIVPFAHNL (199 aa)). 11–16 (GAGKSA) contacts ATP. The interval 196-407 (PFAHNLSTRQ…DWADSTGWKP (212 aa)) is UPF0157.

This sequence in the N-terminal section; belongs to the CoaE family. In the C-terminal section; belongs to the UPF0157 (GrpB) family.

It localises to the cytoplasm. It catalyses the reaction 3'-dephospho-CoA + ATP = ADP + CoA + H(+). It functions in the pathway cofactor biosynthesis; coenzyme A biosynthesis; CoA from (R)-pantothenate: step 5/5. Its function is as follows. Catalyzes the phosphorylation of the 3'-hydroxyl group of dephosphocoenzyme A to form coenzyme A. The chain is Dephospho-CoA kinase from Mycolicibacterium paratuberculosis (strain ATCC BAA-968 / K-10) (Mycobacterium paratuberculosis).